Here is a 374-residue protein sequence, read N- to C-terminus: Type IV secretion system protein PtlG (374 aa).

The helical transmembrane segment at 38 to 56 (WMFALVAVALSCLLATGIW) threads the bilayer. Positions 86-117 (HPREPEPAPLPDMPAAPDPILPQPRPAPPVPP) are disordered. Residues 92-117 (PAPLPDMPAAPDPILPQPRPAPPVPP) are compositionally biased toward pro residues.

It belongs to the TrbI/VirB10 family.

The protein localises to the cell membrane. Component of the type IV secretion system ptl required for secretion of assembled pertussis toxin (PTX) through the outer membrane. The polypeptide is Type IV secretion system protein PtlG (ptlG) (Bordetella pertussis (strain Tohama I / ATCC BAA-589 / NCTC 13251)).